The following is a 213-amino-acid chain: MARLKLRKLEEYLQGVDGFEQPKILLEQYPTPPHIAACMAHHMQSQHEDIEGKLVGDLGCGCGMLSIASTLLGAQLTVGFELDGDAVDTFRGNVVEMELPNVDCVRADVLQLIGSKWEKSFDTVLMNPPFGTKHNAGMDMRFLEVALRLANRAVYSLHKTSTRSYIQKKALEWGARGSVVAELRYNIDASYKFHKQKSKDIEVDFWRFEIGTE.

S-adenosyl-L-methionine is bound by residues Gln-28, Thr-31, Gly-59, Cys-62, and 108–109 (DV).

It belongs to the methyltransferase superfamily. PrmA family. In terms of assembly, heterodimer; heterodimerizes with Trmt112. As to expression, enriched in the brain.

Its subcellular location is the cytoplasm. The enzyme catalyses adenosine in rRNA + S-adenosyl-L-methionine = N(6)-methyladenosine in rRNA + S-adenosyl-L-homocysteine + H(+). Functionally, catalytic subunit of a heterodimer with Trmt112, which specifically methylates the 6th position of adenine in 18S rRNA. This Drosophila melanogaster (Fruit fly) protein is rRNA N(6)-adenosine-methyltransferase Mettl5.